Here is a 319-residue protein sequence, read N- to C-terminus: ATP-dependent 6-phosphofructokinase (319 aa).

G11 contributes to the ATP binding site. 21–25 (RAVVR) contributes to the ADP binding site. Residues 72 to 73 (RC) and 102 to 105 (GDGS) contribute to the ATP site. Position 103 (D103) interacts with Mg(2+). 125-127 (TID) lines the substrate pocket. D127 functions as the Proton acceptor in the catalytic mechanism. ADP is bound at residue R154. Substrate contacts are provided by residues R162 and 169-171 (MGR). ADP-binding positions include 185 to 187 (GAE), R211, and 213 to 215 (KKH). Substrate contacts are provided by residues E222, R243, and 249–252 (HVQR).

It belongs to the phosphofructokinase type A (PFKA) family. ATP-dependent PFK group I subfamily. Prokaryotic clade 'B1' sub-subfamily. As to quaternary structure, homotetramer. Mg(2+) is required as a cofactor.

It is found in the cytoplasm. The catalysed reaction is beta-D-fructose 6-phosphate + ATP = beta-D-fructose 1,6-bisphosphate + ADP + H(+). It functions in the pathway carbohydrate degradation; glycolysis; D-glyceraldehyde 3-phosphate and glycerone phosphate from D-glucose: step 3/4. With respect to regulation, allosterically activated by ADP and other diphosphonucleosides, and allosterically inhibited by phosphoenolpyruvate. Catalyzes the phosphorylation of D-fructose 6-phosphate to fructose 1,6-bisphosphate by ATP, the first committing step of glycolysis. The chain is ATP-dependent 6-phosphofructokinase from Geobacillus kaustophilus (strain HTA426).